The following is a 511-amino-acid chain: Exodeoxyribonuclease 7 large subunit (511 aa).

This sequence belongs to the XseA family. As to quaternary structure, heterooligomer composed of large and small subunits.

Its subcellular location is the cytoplasm. It catalyses the reaction Exonucleolytic cleavage in either 5'- to 3'- or 3'- to 5'-direction to yield nucleoside 5'-phosphates.. Its function is as follows. Bidirectionally degrades single-stranded DNA into large acid-insoluble oligonucleotides, which are then degraded further into small acid-soluble oligonucleotides. This Brucella canis (strain ATCC 23365 / NCTC 10854 / RM-666) protein is Exodeoxyribonuclease 7 large subunit.